We begin with the raw amino-acid sequence, 183 residues long: Putative manganese efflux pump MntP 1 (183 aa).

The next 6 membrane-spanning stretches (helical) occupy residues 6–26 (LFLL…CIGI), 36–56 (IIFV…GGYI), 64–84 (IVPI…ILMI), 100–120 (IMYL…GFTT), 130–150 (LFMS…LGII), and 158–178 (ISII…LFGL).

It belongs to the MntP (TC 9.B.29) family.

Its subcellular location is the cell membrane. Functionally, probably functions as a manganese efflux pump. In Clostridium botulinum (strain Langeland / NCTC 10281 / Type F), this protein is Putative manganese efflux pump MntP 1.